The primary structure comprises 1091 residues: MLFDKLITNTAEAVLQKMDDMKKMRRQRMRELEDLGVFNETEESNLNMYTRGKQKDIQRTDEETTDNQEGSVESSEEGEDQEHEDDGEDEDDEDEDDDDDDDDDDDDDEDDEDEEDGEEDNQKRYYLRQRKATVYYQAPLEKPRHQRKPNIFYSGPASPARPRYRLSSAGPRSPYCKRMNRRRHAIHSSDSTSSSSSEDEQHFERRRKRSRNRAINRYLPLNFRKDELKGIYKDRMKIGASLADVDPMQLDSSVRFDSVGGLSNHIAALKEMVVFPLLYPEVFEKFKIQPPRGCLFYGPPGTGKTLVARALANECSQGDKRVAFFMRKGADCLSKWVGESERQLRLLFDQAYQMRPSIIFFDEIDGLAPVRSSRQDQIHSSIVSTLLALMDGLDSRGEIVVIGATNRLDAIDPALRRPGRFDREFLFSLPDKEARKEILKIHTRDWNPKPLDTFLEELAENCVGYRGADIKSICAEAALCALRRRYPQIYTTSEKLQLDLSSINISAKDFEVAMQKMIPASQRAVTSPGQALSTVVKPLLQNTVDKILEALQRVFPHAEFRTNKTLDSDISCPLLESDLAYSDDDVPSVYENGLSQKSSHKAKDNFNFLHLNRNACYQPMSFRPRILIVGEPGFGQGSHLAPAVIHALEKFTVYTLDIPVLFGVSATSPEETCAQVIREAKRTAPSIVYVPHIHVWWEIVGPTLKATFTTLLQNIPSFAPVLLLATSDKSHSALPEEVQELFIRDYGEIFNVQLPGKEERTKFFEDLILKQAAKPPISKKKAVLQALEVLPVAPPPEPRSLTAEEVKRLEEQEEDTFRELRIFLRNVTHRLAIDKRFRVFTKPVDPDEVPDYVTVIKQPMDLSSVISKIDLHKYLTVKDYLRDIDLICSNALEYNPDRDPGDRLIRHRACALRDTAYAIIKEELDEDFEQLCEEIQESRKKRGCSSSKYAPSYYHVMPKQNSTLVGDKRSDPEQNEKLKTPSTPVACSTPEMCVLRMTRARRSQVEQQQLISVEKALAILSQPTPSLVVDHERLKNLLKTVVKKSRNYNIFQLENLYAVISQCIYQHRKDYDKTSLIQKMEQEVENFSCSR.

Residues 32–211 (LEDLGVFNET…HFERRRKRSR (180 aa)) form a disordered region. Basic and acidic residues predominate over residues 53-62 (KQKDIQRTDE). Acidic residues predominate over residues 74–119 (SSEEGEDQEHEDDGEDEDDEDEDDDDDDDDDDDDDEDDEDEEDGEE). Lys148 participates in a covalent cross-link: Glycyl lysine isopeptide (Lys-Gly) (interchain with G-Cter in SUMO2). A phosphoserine mark is found at Ser158, Ser168, Ser173, and Ser241. 298-305 (GPPGTGKT) is an ATP binding site. Ser577 and Ser582 each carry phosphoserine. 2 coiled-coil regions span residues 801–825 (LTAEEVKRLEEQEEDTFRELRIFLR) and 917–943 (YAIIKEELDEDFEQLCEEIQESRKKRG). In terms of domain architecture, Bromo spans 811-923 (EQEEDTFREL…DTAYAIIKEE (113 aa)). A Glycyl lysine isopeptide (Lys-Gly) (interchain with G-Cter in SUMO2) cross-link involves residue Lys959. Residues 961–985 (NSTLVGDKRSDPEQNEKLKTPSTPV) form a disordered region. Over residues 966–979 (GDKRSDPEQNEKLK) the composition is skewed to basic and acidic residues. Ser970 carries the post-translational modification Phosphoserine. Residue Lys979 forms a Glycyl lysine isopeptide (Lys-Gly) (interchain with G-Cter in SUMO2) linkage. Thr980 and Thr983 each carry phosphothreonine. Position 1003 is a phosphoserine (Ser1003). Thr1024 carries the phosphothreonine modification.

It belongs to the AAA ATPase family. Interaction with ESR1 and NCOA3 is enhanced by estradiol. Interacts with acetylated lysine residues on histone H1.4, H2A, H2B and H3 (in vitro).

The protein resides in the nucleus. The enzyme catalyses ATP + H2O = ADP + phosphate + H(+). Functionally, may be a transcriptional coactivator of the nuclear receptor ESR1 required to induce the expression of a subset of estradiol target genes, such as CCND1, MYC and E2F1. May play a role in the recruitment or occupancy of CREBBP at some ESR1 target gene promoters. May be required for histone hyperacetylation. The sequence is that of ATPase family AAA domain-containing protein 2 (ATAD2) from Pongo abelii (Sumatran orangutan).